A 2083-amino-acid polypeptide reads, in one-letter code: Centriole proteome protein 16 (2083 aa).

The disordered stretch occupies residues D205 to S333. Over residues T227–A245 the composition is skewed to low complexity. Residues S246–K258 show a composition bias toward gly residues. 2 stretches are compositionally biased toward low complexity: residues A259–A274 and G283–G292. Acidic residues predominate over residues G302–D315. The segment covering P319 to S331 has biased composition (pro residues). 10 WD repeats span residues G482–I523, A526–G569, A579–V620, L689–E726, E728–L767, S770–E809, A812–E853, Q856–Q895, V990–G1029, and G1041–E1079. Disordered regions lie at residues H1113 to A1141 and A1225 to P1276. Residues V1263 to P1276 are compositionally biased toward pro residues. 7 WD repeats span residues G1326 to Q1365, Y1403 to A1444, E1448 to R1486, R1497 to Q1539, G1651 to A1691, D1736 to W1781, and R1785 to Y1824. The interval A1713–A1743 is disordered. A compositionally biased stretch (low complexity) spans H1720–A1743. A disordered region spans residues G1832–S1870. The segment covering S1851 to G1860 has biased composition (pro residues). Residues G2035–T2073 form a WD 18 repeat.

The protein belongs to the WD repeat WDR90/POC16 family.

The protein resides in the cytoplasm. Its subcellular location is the cytoskeleton. It is found in the microtubule organizing center. The protein localises to the centrosome. It localises to the centriole. In terms of biological role, required for flagellum assembly and/or maintenance. The protein is Centriole proteome protein 16 of Chlamydomonas reinhardtii (Chlamydomonas smithii).